A 444-amino-acid chain; its full sequence is ATP-dependent protease ATPase subunit HslU (444 aa).

ATP contacts are provided by residues isoleucine 18, 60–65 (GVGKTE), aspartate 256, glutamate 322, and arginine 394.

Belongs to the ClpX chaperone family. HslU subfamily. A double ring-shaped homohexamer of HslV is capped on each side by a ring-shaped HslU homohexamer. The assembly of the HslU/HslV complex is dependent on binding of ATP.

It is found in the cytoplasm. Its function is as follows. ATPase subunit of a proteasome-like degradation complex; this subunit has chaperone activity. The binding of ATP and its subsequent hydrolysis by HslU are essential for unfolding of protein substrates subsequently hydrolyzed by HslV. HslU recognizes the N-terminal part of its protein substrates and unfolds these before they are guided to HslV for hydrolysis. The sequence is that of ATP-dependent protease ATPase subunit HslU from Klebsiella pneumoniae (strain 342).